Reading from the N-terminus, the 226-residue chain is Thiamine-phosphate synthase (226 aa).

4-amino-2-methyl-5-(diphosphooxymethyl)pyrimidine-binding positions include 46–50 (QFRDK) and Asp-83. Residues Asp-84 and Asp-103 each coordinate Mg(2+). Ser-122 serves as a coordination point for 4-amino-2-methyl-5-(diphosphooxymethyl)pyrimidine. 149–151 (TQS) contributes to the 2-[(2R,5Z)-2-carboxy-4-methylthiazol-5(2H)-ylidene]ethyl phosphate binding site. Residue Lys-152 participates in 4-amino-2-methyl-5-(diphosphooxymethyl)pyrimidine binding. 2-[(2R,5Z)-2-carboxy-4-methylthiazol-5(2H)-ylidene]ethyl phosphate-binding positions include Gly-181 and 201-202 (IT).

Belongs to the thiamine-phosphate synthase family. Mg(2+) is required as a cofactor.

It carries out the reaction 2-[(2R,5Z)-2-carboxy-4-methylthiazol-5(2H)-ylidene]ethyl phosphate + 4-amino-2-methyl-5-(diphosphooxymethyl)pyrimidine + 2 H(+) = thiamine phosphate + CO2 + diphosphate. The enzyme catalyses 2-(2-carboxy-4-methylthiazol-5-yl)ethyl phosphate + 4-amino-2-methyl-5-(diphosphooxymethyl)pyrimidine + 2 H(+) = thiamine phosphate + CO2 + diphosphate. It catalyses the reaction 4-methyl-5-(2-phosphooxyethyl)-thiazole + 4-amino-2-methyl-5-(diphosphooxymethyl)pyrimidine + H(+) = thiamine phosphate + diphosphate. It functions in the pathway cofactor biosynthesis; thiamine diphosphate biosynthesis; thiamine phosphate from 4-amino-2-methyl-5-diphosphomethylpyrimidine and 4-methyl-5-(2-phosphoethyl)-thiazole: step 1/1. In terms of biological role, condenses 4-methyl-5-(beta-hydroxyethyl)thiazole monophosphate (THZ-P) and 2-methyl-4-amino-5-hydroxymethyl pyrimidine pyrophosphate (HMP-PP) to form thiamine monophosphate (TMP). This chain is Thiamine-phosphate synthase, found in Haemophilus influenzae (strain PittGG).